A 409-amino-acid chain; its full sequence is Tyrosine--tRNA ligase (409 aa).

Positions 54–63 match the 'HIGH' region motif; that stretch reads PTAPDIHLGH. A 'KMSKS' region motif is present at residues 238–242; sequence KMSKS. Residue K241 coordinates ATP. Residues 347–407 form the S4 RNA-binding domain; it reads QGILRILREA…GKRKFARVKL (61 aa).

This sequence belongs to the class-I aminoacyl-tRNA synthetase family. TyrS type 2 subfamily. In terms of assembly, homodimer.

The protein localises to the cytoplasm. The catalysed reaction is tRNA(Tyr) + L-tyrosine + ATP = L-tyrosyl-tRNA(Tyr) + AMP + diphosphate + H(+). In terms of biological role, catalyzes the attachment of tyrosine to tRNA(Tyr) in a two-step reaction: tyrosine is first activated by ATP to form Tyr-AMP and then transferred to the acceptor end of tRNA(Tyr). The sequence is that of Tyrosine--tRNA ligase from Bordetella pertussis (strain Tohama I / ATCC BAA-589 / NCTC 13251).